Consider the following 1194-residue polypeptide: F-box only protein 38 (1194 aa).

The region spanning 30–75 (MNQLSHEVLCHIFRYLPLQDIMCMECLSRKLKEAVTLYLRVVRVVD) is the F-box domain. The interaction with KLF7 stretch occupies residues 59–119 (KLKEAVTLYL…LHPRYLERRR (61 aa)). 3 consecutive short sequence motifs (nuclear export signal) follow at residues 194-201 (LHLVGVNV), 307-316 (LEVDLGYLII), and 451-460 (LLPSLEFISL). Disordered stretches follow at residues 487–529 (ALVS…FRPD), 577–776 (EEQA…DAES), 793–879 (RTGR…RARS), and 896–915 (KPCH…STSD). The span at 493 to 510 (NSNNDNDNNAPNNNANLH) shows a compositional bias: low complexity. Residue Thr-592 is modified to Phosphothreonine. A phosphoserine mark is found at Ser-599, Ser-601, and Ser-607. Positions 599-609 (SESDDEEDSLE) are enriched in acidic residues. Composition is skewed to basic and acidic residues over residues 622–631 (RYSEREEKTG) and 683–701 (IKAD…KSKD). A compositionally biased stretch (low complexity) spans 705–728 (SCSSSSSSTAASTAGNASSPSTAS). Phosphoserine occurs at positions 742 and 746. Residues 764–774 (EDSEAMEEGDA) show a composition bias toward acidic residues. Residues 793-804 (RTGRCSDEERPS) show a composition bias toward basic and acidic residues. The segment covering 855–867 (SSQPESCDVQSNE) has biased composition (polar residues). A compositionally biased stretch (basic residues) spans 896–906 (KPCHAMKRKRT). A Nuclear localization signal motif is present at residues 902–905 (KRKR).

As to quaternary structure, part of the SCF (SKP1-CUL1-F-box) E3 ubiquitin-protein ligase complex SCF(FBXO38) composed of CUL1, SKP1, RBX1 and FBXO38. Interacts with KLF7. Interacts with PDCD1/PD-1. As to expression, expressed at high levels in embryo (developing brain, spinal cord, branchial arms and limbs). Widely expressed at low levels in adult tissues, with highest expression in testis. Expressed in postmeiotic spermatids.

It is found in the cytoplasm. The protein resides in the cytosol. It localises to the nucleus. Its pathway is protein modification; protein ubiquitination. In terms of biological role, substrate recognition component of a SCF (SKP1-CUL1-F-box protein) E3 ubiquitin-protein ligase complex which mediates the ubiquitination and subsequent proteasomal degradation of PDCD1/PD-1, thereby regulating T-cells-mediated immunity. Required for anti-tumor activity of T-cells by promoting the degradation of PDCD1/PD-1; the PDCD1-mediated inhibitory pathway being exploited by tumors to attenuate anti-tumor immunity and facilitate tumor survival. May indirectly stimulate the activity of transcription factor KLF7, a regulator of neuronal differentiation, without promoting KLF7 ubiquitination. The polypeptide is F-box only protein 38 (Mus musculus (Mouse)).